Consider the following 460-residue polypeptide: Acetyl-coenzyme A carboxylase carboxyl transferase subunit beta, chloroplastic (460 aa).

The CoA carboxyltransferase N-terminal domain occupies leucine 179–asparagine 460. Positions 183, 186, 202, and 205 each coordinate Zn(2+). Residues cysteine 183–cysteine 205 form a C4-type zinc finger.

It belongs to the AccD/PCCB family. As to quaternary structure, acetyl-CoA carboxylase is a heterohexamer composed of biotin carboxyl carrier protein, biotin carboxylase and 2 subunits each of ACCase subunit alpha and ACCase plastid-coded subunit beta (accD). Requires Zn(2+) as cofactor.

The protein resides in the plastid. Its subcellular location is the chloroplast stroma. It carries out the reaction N(6)-carboxybiotinyl-L-lysyl-[protein] + acetyl-CoA = N(6)-biotinyl-L-lysyl-[protein] + malonyl-CoA. The protein operates within lipid metabolism; malonyl-CoA biosynthesis; malonyl-CoA from acetyl-CoA: step 1/1. Component of the acetyl coenzyme A carboxylase (ACC) complex. Biotin carboxylase (BC) catalyzes the carboxylation of biotin on its carrier protein (BCCP) and then the CO(2) group is transferred by the transcarboxylase to acetyl-CoA to form malonyl-CoA. This Cicer arietinum (Chickpea) protein is Acetyl-coenzyme A carboxylase carboxyl transferase subunit beta, chloroplastic.